Here is a 276-residue protein sequence, read N- to C-terminus: Energy-coupling factor transporter ATP-binding protein EcfA1 (276 aa).

The ABC transporter domain occupies 2–237 (IEIKNLKFKY…GSELVDLGLD (236 aa)). 37-44 (GHNGSGKS) contacts ATP.

The protein belongs to the ABC transporter superfamily. Energy-coupling factor EcfA family. Forms a stable energy-coupling factor (ECF) transporter complex composed of 2 membrane-embedded substrate-binding proteins (S component), 2 ATP-binding proteins (A component) and 2 transmembrane proteins (T component).

The protein resides in the cell membrane. Functionally, ATP-binding (A) component of a common energy-coupling factor (ECF) ABC-transporter complex. Unlike classic ABC transporters this ECF transporter provides the energy necessary to transport a number of different substrates. This chain is Energy-coupling factor transporter ATP-binding protein EcfA1, found in Streptococcus thermophilus (strain ATCC BAA-491 / LMD-9).